The sequence spans 396 residues: MKDKDSLLQNAGINTRLTHIGNDPFDYHGFINPPVVHASTVLFPNARAMETRTQKYTYGTRGTPTTDALCEAIDALEGSAGTILVPSGLAAVTIPFLGFVAAGDHALVVDSVYGPTRHFCDTMLKRLGVEVEYYHPEIGAGIETLFRSNTKLVHTEAPGSNTFEMQDIPAISAVAHRHGAVVMMDNTWATPVYFRPLDHGVDISIHASTKYPSGHSDILLGTVSANAEHWERLKEANGVLGICGAPDDAYQILRGLRTMGLRLERHYESALDIAKWLEGRDDVARVLHPALPSFPSHHLWKRDFKGASGIFSFVLAADGPEKSRAKAHAFLDALRIFGLGYSWGGFESLALHAYLNDRTVAKAPTDGPVIRLQIGIEDVADLKADIERGFAAASAV.

Lysine 210 is modified (N6-(pyridoxal phosphate)lysine).

The protein belongs to the trans-sulfuration enzymes family. Pyridoxal 5'-phosphate is required as a cofactor.

It carries out the reaction L,L-cystathionine + H2O = L-homocysteine + pyruvate + NH4(+). It catalyses the reaction an S-substituted L-cysteine + H2O = a thiol + pyruvate + NH4(+). The protein operates within amino-acid biosynthesis; L-methionine biosynthesis via de novo pathway; L-homocysteine from L-cystathionine: step 1/1. Its function is as follows. Catalyzes the cleavage of cystathionine to homocysteine, pyruvate and ammonia during methionine biosynthesis. This chain is Putative cystathionine beta-lyase (metC), found in Rhizobium johnstonii (strain DSM 114642 / LMG 32736 / 3841) (Rhizobium leguminosarum bv. viciae).